The chain runs to 153 residues: MGTKIVLKKDVDTLGKAGTLVEVAPGYARNYLIPQGLAVKATPGLVKEAEFRQAKRREIEAKHRADALETKKTLEALGFYEVFAPVGEDGNQLFGTVTNQDVAEVVASKAGITIDRREITIEEPIKRTGVYTVKARIFQDVVATLRLQVNAAG.

Belongs to the bacterial ribosomal protein bL9 family.

Its function is as follows. Binds to the 23S rRNA. The polypeptide is Large ribosomal subunit protein bL9 (Gloeobacter violaceus (strain ATCC 29082 / PCC 7421)).